We begin with the raw amino-acid sequence, 439 residues long: Hemagglutinin-esterase (439 aa).

Positions 1 to 22 are cleaved as a signal peptide; the sequence is MGSMCIAMAPRTLLLLIGCQLA. The interval 12-132 is esterase domain 1; sequence TLLLLIGCQL…DNKRWMGNKA (121 aa). Residues 23–407 are Virion surface-facing; it reads LGFNEPLNVV…PVCLYDPLPV (385 aa). The Nucleophile role is filled by Ser45. Cysteines 49 and 70 form a disulfide. Residues Asn94, Asn152, Asn196, Asn246, and Asn316 are each glycosylated (N-linked (GlcNAc...) asparagine; by host). The cysteines at positions 118 and 167 are disulfide-linked. A receptor binding region spans residues 133-281; that stretch reads RFYALVYKKM…GNYKAVSLEY (149 aa). 2 disulfides stabilise this stretch: Cys202–Cys291 and Cys210–Cys264. The tract at residues 282–395 is esterase domain 2; sequence LLTIPSKAIC…QCPTAANIEF (114 aa). Cys322 and Cys327 are disulfide-bonded. Residues Asn331 and Asn337 are each glycosylated (N-linked (GlcNAc...) asparagine; by host). Catalysis depends on charge relay system residues Asp342 and His345. 2 N-linked (GlcNAc...) asparagine; by host glycosylation sites follow: Asn360 and Asn374. Cysteines 363 and 387 form a disulfide. The chain crosses the membrane as a helical span at residues 408–428; that stretch reads ILLGVLLGIAVLIIVFLLFYF. Residues 429–439 are Intravirion-facing; that stretch reads MTDSGVRLHEA.

It belongs to the influenza type C/coronaviruses hemagglutinin-esterase family. As to quaternary structure, homodimer; disulfide-linked. Forms a complex with the M protein in the pre-Golgi. Associates then with S-M complex to form a ternary complex S-M-HE. In terms of processing, N-glycosylated in the host RER.

Its subcellular location is the virion membrane. It is found in the host cell membrane. The catalysed reaction is N-acetyl-9-O-acetylneuraminate + H2O = N-acetylneuraminate + acetate + H(+). The enzyme catalyses N-acetyl-4-O-acetylneuraminate + H2O = N-acetylneuraminate + acetate + H(+). Functionally, structural protein that makes short spikes at the surface of the virus. Contains receptor binding and receptor-destroying activities. Mediates de-O-acetylation of N-acetyl-4-O-acetylneuraminic acid, which is probably the receptor determinant recognized by the virus on the surface of erythrocytes and susceptible cells. This receptor-destroying activity is important for virus release as it probably helps preventing self-aggregation and ensures the efficient spread of the progeny virus from cell to cell. May serve as a secondary viral attachment protein for initiating infection, the spike protein being the major one. May become a target for both the humoral and the cellular branches of the immune system. The chain is Hemagglutinin-esterase from Puffinosis coronavirus (PV).